Reading from the N-terminus, the 380-residue chain is NF-kappa-B inhibitor-like protein 1 (380 aa).

The tract at residues 1–34 is disordered; that stretch reads MSNPSPQVPEEEASTSVCRPKSSMASTSRRQRRE. ANK repeat units follow at residues 64-93 and 97-133; these read GQPP…DPAH and HGDT…IKNK. Disordered stretches follow at residues 131–166 and 185–293; these read KNKD…EWRQ and GDAS…RGSL. At Ser150 the chain carries Phosphoserine. The segment covering 237 to 286 has biased composition (basic and acidic residues); it reads QQEEEQRLFRERARAKEEELRESRARRAQEALGDREPKPTRAGPREEHPR.

In terms of assembly, interacts with CACTIN (via N-terminal domain); the interaction occurs in a pro-inflammatory-independent manner.

It localises to the nucleus. In terms of biological role, involved in the regulation of innate immune response. Acts as negative regulator of Toll-like receptor and interferon-regulatory factor (IRF) signaling pathways. Contributes to the negative regulation of transcriptional activation of NF-kappa-B target genes in response to endogenous pro-inflammatory stimuli. The sequence is that of NF-kappa-B inhibitor-like protein 1 (NFKBIL1) from Pan troglodytes (Chimpanzee).